We begin with the raw amino-acid sequence, 102 residues long: Small ribosomal subunit protein uS10 (102 aa).

The protein belongs to the universal ribosomal protein uS10 family. Part of the 30S ribosomal subunit.

Functionally, involved in the binding of tRNA to the ribosomes. The chain is Small ribosomal subunit protein uS10 from Methanoculleus marisnigri (strain ATCC 35101 / DSM 1498 / JR1).